The sequence spans 128 residues: Protein BEX2 (128 aa).

Residues 1 to 44 are disordered; sequence MMPKEEQVLKNLTMENANEENEKKDEKEQDANKGEPLALSLGAG. The segment covering 20–33 has biased composition (basic and acidic residues); it reads ENEKKDEKEQDANK. R50 is modified (omega-N-methylarginine). The tract at residues 103–128 is disordered; sequence QLSHSLRAVSTDPPHHEHNDEFCLMP. The segment covering 115–128 has biased composition (basic and acidic residues); sequence PPHHEHNDEFCLMP. Residues 117–121 are his cluster; that stretch reads HHEHN. C125 contributes to the Zn(2+) binding site.

This sequence belongs to the BEX family. As to quaternary structure, interacts with LMO2, possibly leading to regulate the transcriptional activity of a DNA-binding complex containing LMO2. Interacts with OMP.

The protein localises to the cytoplasm. It is found in the nucleus. Functionally, regulator of mitochondrial apoptosis and G1 cell cycle. Regulates the level of PP2A regulatory subunit B and PP2A phosphatase activity. In absence of reductive stress, acts as a pseudosubstrate for the CRL2(FEM1B) complex: associates with FEM1B via zinc, thereby preventing association between FEM1B and its substrates. This Bos taurus (Bovine) protein is Protein BEX2 (BEX2).